A 77-amino-acid chain; its full sequence is Apelin (77 aa).

The signal sequence occupies residues 1-22 (MNLSFCVQALLLLWLSLTAVCG). A propeptide spanning residues 23–41 (VPLMLPPDGKGLEEGNMRY) is cleaved from the precursor. Residues 45–77 (PRTSRTGPGAWQGGRRKFRRQRPRLSHKGPMPF) are disordered. Positions 58 to 71 (GRRKFRRQRPRLSH) are enriched in basic residues.

Belongs to the apelin family. Several active peptides may be produced by proteolytic processing of the peptide precursor. In terms of tissue distribution, expressed in the lung, testis, ovary, uterus and mammary gland. Expressed in neurons in the thalamic paraventricular and hypothalamic supraoptic nuclei. The lung, testis and uterus mainly contain a large form that looks like apelin-36, whereas the mammary gland seems to contain 2 forms of apelin, a large form close to apelin-36 and a small form close to apelin-13 (at protein level). Widely expressed in the adult, with highest levels in the mammary gland of lactating animals, very high levels in the lung, intermediate levels in the spinal cord, ovary, adipose tissue, brain (neuronal cell bodies and fibers in the supraoptic and the paraventricular nuclei), heart and testis, and lowest levels in the pituitary gland, kidney, stomach, uterus and pancreas.

The protein localises to the secreted. The protein resides in the extracellular space. Its function is as follows. Peptide hormone that functions as endogenous ligand for the G-protein-coupled apelin receptor (APLNR/APJ), that plays a role in cadiovascular homeostasis. Functions as a balanced agonist activating both G(i) protein pathway and beta-arrestin pathway of APLNR. Downstream G proteins activation, apelin can inhibit cAMP production and activate key intracellular effectors such as ERKs. On the other hand, APLNR activation induces beta-arrestin recruitment to the membrane leading to desensitization and internalization of the receptor. Apelin blunts cardiac hypertrophic induction from APLNR on response to pathological stimuli, but also induces myocardial hypertrophy under normal conditions. Apelin-36 dissociates more hardly than (pyroglu)apelin-13 from APLNR. Involved in the regulation of cardiac precursor cell movements during gastrulation and heart morphogenesis. Has an inhibitory effect on cytokine production in response to T-cell receptor/CD3 cross-linking; the oral intake of apelin in the colostrum and the milk might therefore modulate immune responses in neonates. Plays a role in early coronary blood vessels formation. Mediates myocardial contractility in an ERK1/2-dependent manner. May also have a role in the central control of body fluid homeostasis by influencing vasopressin release and drinking behavior. The polypeptide is Apelin (Rattus norvegicus (Rat)).